Here is a 122-residue protein sequence, read N- to C-terminus: Large ribosomal subunit protein uL14 (122 aa).

It belongs to the universal ribosomal protein uL14 family. In terms of assembly, part of the 50S ribosomal subunit. Forms a cluster with proteins L3 and L19. In the 70S ribosome, L14 and L19 interact and together make contacts with the 16S rRNA in bridges B5 and B8.

Its function is as follows. Binds to 23S rRNA. Forms part of two intersubunit bridges in the 70S ribosome. The protein is Large ribosomal subunit protein uL14 of Borreliella burgdorferi (strain ATCC 35210 / DSM 4680 / CIP 102532 / B31) (Borrelia burgdorferi).